The following is a 473-amino-acid chain: 3-isopropylmalate dehydratase large subunit (473 aa).

[4Fe-4S] cluster contacts are provided by C355, C415, and C418. A disordered region spans residues 423 to 452 (PDQLAPGERSASTSNRNFEGRQGKGGRTHL).

Belongs to the aconitase/IPM isomerase family. LeuC type 1 subfamily. In terms of assembly, heterodimer of LeuC and LeuD. The cofactor is [4Fe-4S] cluster.

The enzyme catalyses (2R,3S)-3-isopropylmalate = (2S)-2-isopropylmalate. The protein operates within amino-acid biosynthesis; L-leucine biosynthesis; L-leucine from 3-methyl-2-oxobutanoate: step 2/4. Catalyzes the isomerization between 2-isopropylmalate and 3-isopropylmalate, via the formation of 2-isopropylmaleate. This is 3-isopropylmalate dehydratase large subunit from Corynebacterium jeikeium (strain K411).